A 393-amino-acid chain; its full sequence is Endoglucanase 1 (393 aa).

The N-terminal stretch at 1–26 (MAFKLNIGLLALSLSLSLVHLDGVRA) is a signal peptide. Residue aspartate 34 is the Nucleophile of the active site. Residue aspartate 152 is the Proton donor of the active site. The segment at 233–393 (GCQRKDDNTI…GGHKKCHKKH (161 aa)) is disordered. 2 stretches are compositionally biased toward low complexity: residues 319–329 (QGSSNGDATTG) and 337–370 (DSGSTANGSGSGAPTSGSDGSAVAPPSGGSNPGA). Asparagine 343 carries N-linked (GlcNAc...) asparagine glycosylation. The segment covering 371-384 (AQGGQGGAQPGPSG) has biased composition (gly residues).

The protein belongs to the glycosyl hydrolase 45 (cellulase K) family. May also be O-glycosylated. Hyphal tip.

The protein localises to the secreted. The enzyme catalyses Endohydrolysis of (1-&gt;4)-beta-D-glucosidic linkages in cellulose, lichenin and cereal beta-D-glucans.. This chain is Endoglucanase 1 (EGL1), found in Mycosarcoma maydis (Corn smut fungus).